The primary structure comprises 214 residues: Small ribosomal subunit protein eS6 (214 aa).

This sequence belongs to the eukaryotic ribosomal protein eS6 family.

In Saccharolobus islandicus (strain L.S.2.15 / Lassen #1) (Sulfolobus islandicus), this protein is Small ribosomal subunit protein eS6.